The chain runs to 191 residues: MFVLKSASPRRKQILFDLGFDLKIDPEHIDESQKELESPLEYLERMVHSKLGTLFEPNNVYLAADTIVVYQNQILHKPIDTNDAFRILKILSGKNHSVFSGAALRHPNGTEYFYEETMIGFQNWNDFEINEYIKRSKPFDKAGSYGIQDKEGPVLQWIGSYTNVMGFPLRSFLSRHELWIGSWEERIMRRD.

The Proton acceptor role is filled by aspartate 65.

It belongs to the Maf family. YhdE subfamily. A divalent metal cation serves as cofactor.

It localises to the cytoplasm. The catalysed reaction is dTTP + H2O = dTMP + diphosphate + H(+). It carries out the reaction UTP + H2O = UMP + diphosphate + H(+). Nucleoside triphosphate pyrophosphatase that hydrolyzes dTTP and UTP. May have a dual role in cell division arrest and in preventing the incorporation of modified nucleotides into cellular nucleic acids. In Leptospira biflexa serovar Patoc (strain Patoc 1 / Ames), this protein is dTTP/UTP pyrophosphatase.